The chain runs to 425 residues: Adenylosuccinate synthetase (425 aa).

GTP is bound by residues Gly12–Lys18 and Gly40–Thr42. Asp13 functions as the Proton acceptor in the catalytic mechanism. The Mg(2+) site is built by Asp13 and Gly40. IMP is bound by residues Asp13–Lys16, Asn38–His41, Thr130, Arg144, Gln224, Thr239, and Arg301. His41 (proton donor) is an active-site residue. Thr297 to Arg303 provides a ligand contact to substrate. GTP-binding positions include Arg303, Lys329–Asp331, and Ser411–Ser413.

This sequence belongs to the adenylosuccinate synthetase family. In terms of assembly, homodimer. It depends on Mg(2+) as a cofactor.

The protein localises to the cytoplasm. The enzyme catalyses IMP + L-aspartate + GTP = N(6)-(1,2-dicarboxyethyl)-AMP + GDP + phosphate + 2 H(+). It participates in purine metabolism; AMP biosynthesis via de novo pathway; AMP from IMP: step 1/2. Functionally, plays an important role in the de novo pathway of purine nucleotide biosynthesis. Catalyzes the first committed step in the biosynthesis of AMP from IMP. This is Adenylosuccinate synthetase from Wolbachia pipientis subsp. Culex pipiens (strain wPip).